Consider the following 1185-residue polypeptide: Mucin-6 (1185 aa).

Disulfide bonds link Cys1-Cys132 and Cys23-Cys168. The VWFD 1 domain maps to 1–169; that stretch reads CSTWGGGHFS…KMDDPSEICL (169 aa). N-linked (GlcNAc...) (complex) asparagine glycosylation occurs at Asn223. The region spanning 257–312 is the TIL 1 domain; that stretch reads CSANQIYEECGSPCIKTCSNPEYSCSSHCTYGCFCPEGTVLDDISKNRTCVHLEQC. A VWFD 2 domain is found at 350–534; sequence GRCSLEGGSF…AMERETDPCA (185 aa). 2 disulfide bridges follow: Cys352/Cys488 and Cys374/Cys533. TIL domains lie at 619–676 and 737–782; these read CTGN…KSHC and GATC…PEEC. The VWFD 3 domain occupies 821–993; it reads STCNLYGEGH…NSWKENPLCG (173 aa). 4 disulfides stabilise this stretch: Cys823–Cys957, Cys845–Cys992, Cys854–Cys954, and Cys872–Cys879. Asn930 is a glycosylation site (N-linked (GlcNAc...) (complex) asparagine). Residues 1160 to 1178 show a composition bias toward low complexity; sequence PTATQPTSPSTSSASTVLT. The interval 1160 to 1185 is disordered; the sequence is PTATQPTSPSTSSASTVLTETTNPPV.

In terms of assembly, multimer; disulfide-linked. Post-translationally, N-glycosylated with N-acetylglucosamine (6.7%), N-acetylgalactosamine (0.6%), galactose (1.8%), mannose (4.6%), N-acetylneuraminic acid (1.0%) and sulfate-containing glycans (0.7%).

Its subcellular location is the secreted. Its function is as follows. Ovomucin, the glycoprotein responsible for the gel properties of egg white, is composed for 2 subunits, alpha-ovomucin/MUC5B and beta-ovomucin/MUC6. This chain is Mucin-6 (MUC6), found in Gallus gallus (Chicken).